Here is a 134-residue protein sequence, read N- to C-terminus: uncharacterized protein (134 aa).

3 helical membrane passes run 21 to 41, 52 to 72, and 95 to 115; these read FSTT…LYLI, LVLL…TPYE, and IVMA…VYII.

The protein localises to the host membrane. This is an uncharacterized protein from Acidianus two-tailed virus (ATV).